We begin with the raw amino-acid sequence, 838 residues long: Glycogen phosphorylase, brain form (838 aa).

Residue A2 is modified to N-acetylalanine. Residue S15 is modified to Phosphoserine. 3 residues coordinate AMP: D43, Y197, and R310. The residue at position 197 (Y197) is a Phosphotyrosine. Residue Y473 is modified to Phosphotyrosine. The residue at position 524 (S524) is a Phosphoserine. A pyridoxal 5'-phosphate-binding site is contributed by K569. Positions 677-678 are pyridoxal 5'-phosphate; sequence TG. At K681 the chain carries N6-(pyridoxal phosphate)lysine.

The protein belongs to the glycogen phosphorylase family. As to quaternary structure, homodimer. Dimers associate into a tetramer to form the enzymatically active phosphorylase A. It depends on pyridoxal 5'-phosphate as a cofactor. Phosphorylation of Ser-15 converts phosphorylase B (unphosphorylated) to phosphorylase A.

It carries out the reaction [(1-&gt;4)-alpha-D-glucosyl](n) + phosphate = [(1-&gt;4)-alpha-D-glucosyl](n-1) + alpha-D-glucose 1-phosphate. Activity of phosphorylase is controlled both by allosteric means (through the non-covalent binding of metabolites) and by covalent modification. Thus AMP allosterically activates, whereas ATP, ADP, and glucose-6-phosphate allosterically inhibit, phosphorylase B. Glycogen phosphorylase that regulates glycogen mobilization. Phosphorylase is an important allosteric enzyme in carbohydrate metabolism. Enzymes from different sources differ in their regulatory mechanisms and in their natural substrates. However, all known phosphorylases share catalytic and structural properties. The polypeptide is Glycogen phosphorylase, brain form (Pygb) (Rattus norvegicus (Rat)).